A 493-amino-acid chain; its full sequence is MRDLLSKKSHRQLELLELLFEHKRWFHRSELAELLNCTERAVKDDLSHVKSAFPDLIFHSSTNGIRIINTDDSDIEMVYHHFFKHSTHFSILEFIFFNEGCQAESICKEFYISSSSLYRIISQINKVIKRQFQFEVSLTPVQIIGNERDIRYFFAQYFSEKYYFLEWPFENFSSEPLSQLLELVYKETSFPMNLSTHRMLKLLLVTNLYRIKFGHFMEVDKDSFNDQSLDFLMQAEGIEGVAQSFESEYNISLDEEVVCQLFVSYFQKMFFIDESLFMKCVKKDSYVEKSYHLLSDFIDQISVKYQIEMENKDNLIWHLHNTAHLYRQELFTEFILFDQKGNTIRNFQNIFPKFVSDIKKELSHYLETLEVCSSSMMVNHLSYTFITHTKHLVINLLQNQPKLKVLVMSNFDQYHAKFVAETLSYYCSNNFELEVWTELELSKESLEDSPYDIIISNFIIPPIENKRLIYSNNINTVSLIYLLNAMMFIRLDE.

It belongs to the AtxA/AcpA family.

This is Putative trans-acting regulator SP_1800 from Streptococcus pneumoniae serotype 4 (strain ATCC BAA-334 / TIGR4).